The primary structure comprises 282 residues: Undecaprenyl-diphosphatase (282 aa).

Helical transmembrane passes span 40 to 60 (GAAF…IYFY), 87 to 107 (MGWM…LFKT), 116 to 136 (LYWI…AEWL), 153 to 173 (IGWK…IPGS), 196 to 216 (FSFL…LYET), 229 to 249 (NLAV…AFLI), and 256 to 276 (STAL…GLIA).

It belongs to the UppP family.

The protein resides in the cell inner membrane. The catalysed reaction is di-trans,octa-cis-undecaprenyl diphosphate + H2O = di-trans,octa-cis-undecaprenyl phosphate + phosphate + H(+). In terms of biological role, catalyzes the dephosphorylation of undecaprenyl diphosphate (UPP). Confers resistance to bacitracin. This is Undecaprenyl-diphosphatase from Chlorobium phaeobacteroides (strain BS1).